The following is a 1045-amino-acid chain: Pre-mRNA-splicing factor ATP-dependent RNA helicase DHX16 (1045 aa).

Positions 101–211 are disordered; it reads EDSEESSEEA…ERSDKKAYEE (111 aa). A phosphoserine mark is found at serine 103, serine 106, and serine 107. Residues 119-131 are compositionally biased toward basic residues; that stretch reads QKKRKKRKHLRKK. Over residues 135 to 144 the composition is skewed to acidic residues; that stretch reads EEEEEEEEEV. Serine 164 bears the Phosphoserine mark. Residues 170–211 are compositionally biased toward basic and acidic residues; that stretch reads RTERERLQDLEERDAFAERVRQRDKDRTRNVLERSDKKAYEE. Residues 413–577 enclose the Helicase ATP-binding domain; sequence LAAVANHQIL…FDDAPVFRIP (165 aa). 426–433 contacts ATP; it reads GETGSGKT. A DEAH box motif is present at residues 524–527; the sequence is DEAH. Positions 602–775 constitute a Helicase C-terminal domain; that stretch reads SVLQIHVTQP…NVVLLLKSLG (174 aa). Threonine 716 carries the post-translational modification Phosphothreonine. A disordered region spans residues 1026-1045; the sequence is EDPHAKKMPKKTGKTREELG.

Belongs to the DEAD box helicase family. DEAH subfamily. DDX16/PRP8 sub-subfamily. In terms of assembly, component of pre-catalytic spliceosome complexes. Component of the minor spliceosome, which splices U12-type introns. Interacts with GPKOW. Interacts with TRIM6. Interacts with RIGI.

The protein localises to the nucleus. It localises to the nucleoplasm. Its subcellular location is the cytoplasm. The catalysed reaction is ATP + H2O = ADP + phosphate + H(+). Required for pre-mRNA splicing as a component of the spliceosome. Contributes to pre-mRNA splicing after spliceosome formation and prior to the first transesterification reaction. As a component of the minor spliceosome, involved in the splicing of U12-type introns in pre-mRNAs. Also plays a role in innate antiviral response by acting as a pattern recognition receptor sensing splicing signals in viral RNA. Mechanistically, TRIM6 promotes the interaction between unanchored 'Lys-48'-polyubiquitin chains and DHX16, leading to DHX16 interaction with RIGI and ssRNA to amplify RIGI-dependent innate antiviral immune responses. The protein is Pre-mRNA-splicing factor ATP-dependent RNA helicase DHX16 (DHX16) of Sus scrofa (Pig).